The chain runs to 461 residues: Calcitonin gene-related peptide type 1 receptor (461 aa).

Positions Met-1–Ala-22 are cleaved as a signal peptide. The Extracellular segment spans residues Glu-23 to Leu-139. Cystine bridges form between Cys-48–Cys-74, Cys-65–Cys-105, and Cys-88–Cys-127. Residues Asn-66, Asn-118, and Asn-123 are each glycosylated (N-linked (GlcNAc...) asparagine). The chain crosses the membrane as a helical span at residues Asn-140 to Phe-164. The Cytoplasmic segment spans residues Tyr-165–Thr-175. A helical transmembrane segment spans residues Leu-176–Val-198. Residues Ala-199–Pro-209 are Extracellular-facing. Residues Val-210 to His-238 traverse the membrane as a helical segment. The Cytoplasmic portion of the chain corresponds to Thr-239–Leu-252. Residues Met-253–Ala-273 form a helical membrane-spanning segment. Topologically, residues Arg-274–His-289 are extracellular. The interval Thr-288–His-289 is required for RAMP3 interaction. A helical membrane pass occupies residues Leu-290–Arg-314. The Cytoplasmic segment spans residues Val-315–Asn-329. A helical membrane pass occupies residues Leu-330–Leu-351. The Extracellular segment spans residues Ile-352–Asp-366. Residues Tyr-367–Phe-387 form a helical membrane-spanning segment. Phosphoserine occurs at positions 420 and 445.

Belongs to the G-protein coupled receptor 2 family. Heterodimer of CALCRL and RAMP1; the receptor complex functions as CGRP receptor. Heterodimer of CALCRL and RAMP2 or CALCRL and RAMP3; the complexes function as adrenomedullin receptor. As to expression, predominantly expressed in the lung and heart.

The protein localises to the cell membrane. Its function is as follows. G protein-coupled receptor which specificity is determined by its interaction with receptor-activity-modifying proteins (RAMPs). Together with RAMP1, form the receptor complex for calcitonin-gene-related peptides CALCA/CGRP1 and CALCB/CGRP2. Together with RAMP2 or RAMP3, function as receptor complexes for adrenomedullin (ADM and ADM2). Ligand binding causes a conformation change that triggers signaling via guanine nucleotide-binding proteins (G proteins) and modulates the activity of downstream effectors. Activates cAMP-dependent pathway. In Homo sapiens (Human), this protein is Calcitonin gene-related peptide type 1 receptor.